The chain runs to 332 residues: 6-phosphogluconolactonase (332 aa).

It belongs to the cycloisomerase 2 family.

The catalysed reaction is 6-phospho-D-glucono-1,5-lactone + H2O = 6-phospho-D-gluconate + H(+). It participates in carbohydrate degradation; pentose phosphate pathway; D-ribulose 5-phosphate from D-glucose 6-phosphate (oxidative stage): step 2/3. Its function is as follows. Catalyzes the hydrolysis of 6-phosphogluconolactone to 6-phosphogluconate. This Pectobacterium carotovorum subsp. carotovorum (strain PC1) protein is 6-phosphogluconolactonase.